The sequence spans 172 residues: Adenine phosphoribosyltransferase (172 aa).

It belongs to the purine/pyrimidine phosphoribosyltransferase family. As to quaternary structure, homodimer.

Its subcellular location is the cytoplasm. It catalyses the reaction AMP + diphosphate = 5-phospho-alpha-D-ribose 1-diphosphate + adenine. Its pathway is purine metabolism; AMP biosynthesis via salvage pathway; AMP from adenine: step 1/1. Its function is as follows. Catalyzes a salvage reaction resulting in the formation of AMP, that is energically less costly than de novo synthesis. The sequence is that of Adenine phosphoribosyltransferase from Microcystis aeruginosa (strain NIES-843 / IAM M-2473).